The sequence spans 519 residues: Flavonoid 8-hydroxylase 2, chloroplastic (519 aa).

A chloroplast-targeting transit peptide spans 1-46 (MEVLQASSLSFQLLRRHSRNNLINKFRNPSLPRIHMPRQNIDLKTF). In terms of domain architecture, Rieske spans 77–188 (WYPVASVCDL…SCVRNGIVWF (112 aa)). [2Fe-2S] cluster is bound by residues C119, H121, C139, and H142. H241 and H246 together coordinate Fe cation. Residues 447-450 (CSSC) carry the Redox-active motif motif. The next 2 membrane-spanning stretches (helical) occupy residues 462–478 (IGLQ…AAAV) and 485–501 (YSMV…SKWL).

Requires [2Fe-2S] cluster as cofactor. Glandular trichome-specific expression in leaves.

The protein resides in the plastid. It localises to the chloroplast membrane. Its subcellular location is the cytoplasm. It catalyses the reaction salvigenin + 2 reduced [2Fe-2S]-[ferredoxin] + O2 + 2 H(+) = 8-hydroxysalvigenin + 2 oxidized [2Fe-2S]-[ferredoxin] + H2O. It functions in the pathway flavonoid metabolism. Its function is as follows. Rieske-type, PAO-family oxygenase involved in the biosynthesis of polymethoxylated flavonoids natural products such as nevadensin and salvigenin, aroma compounds which contribute to the flavor of sweet basil, and exhibit pharmacological activities such as anti-allergic, anti-oxidant, antibacterial, anti-proliferative, and anti-inflammatory effects. Catalyzes the hydroxylation of salvigenin to produce 8-hydroxysalvigenin (8-OH-SALV). In Ocimum basilicum (Sweet basil), this protein is Flavonoid 8-hydroxylase 2, chloroplastic.